The chain runs to 430 residues: 3-phosphoshikimate 1-carboxyvinyltransferase (430 aa).

3-phosphoshikimate contacts are provided by Lys23, Ser24, and Arg28. Lys23 contributes to the phosphoenolpyruvate binding site. Phosphoenolpyruvate is bound by residues Gly95 and Arg123. 4 residues coordinate 3-phosphoshikimate: Ser169, Gln171, Asp315, and Lys342. A phosphoenolpyruvate-binding site is contributed by Gln171. Asp315 functions as the Proton acceptor in the catalytic mechanism. 2 residues coordinate phosphoenolpyruvate: Arg346 and Arg388.

This sequence belongs to the EPSP synthase family. In terms of assembly, monomer.

The protein localises to the cytoplasm. It catalyses the reaction 3-phosphoshikimate + phosphoenolpyruvate = 5-O-(1-carboxyvinyl)-3-phosphoshikimate + phosphate. Its pathway is metabolic intermediate biosynthesis; chorismate biosynthesis; chorismate from D-erythrose 4-phosphate and phosphoenolpyruvate: step 6/7. In terms of biological role, catalyzes the transfer of the enolpyruvyl moiety of phosphoenolpyruvate (PEP) to the 5-hydroxyl of shikimate-3-phosphate (S3P) to produce enolpyruvyl shikimate-3-phosphate and inorganic phosphate. The chain is 3-phosphoshikimate 1-carboxyvinyltransferase from Streptococcus pyogenes serotype M6 (strain ATCC BAA-946 / MGAS10394).